Here is a 30-residue protein sequence, read N- to C-terminus: Antibacterial 6.5 kDa protein (30 aa).

Positions 1–21 (XXVPYPRPFPRPPIGPRPLPF) are enriched in pro residues. The tract at residues 1-30 (XXVPYPRPFPRPPIGPRPLPFPGGGRPFQS) is disordered.

The protein to bovine bactenecin 7.

Functionally, strong antimicrobial activity against P.immobilis and M.luteus, less active against E.coli D22. The polypeptide is Antibacterial 6.5 kDa protein (Carcinus maenas (Common shore crab)).